The following is a 583-amino-acid chain: Extracellular serine/threonine protein kinase four-jointed (583 aa).

Residues 1-78 lie on the Cytoplasmic side of the membrane; the sequence is MYDIKRLEAG…RRRSLQRRAC (78 aa). A helical; Signal-anchor for type II membrane protein membrane pass occupies residues 79-99; it reads LLSILAAFVFGMALGVVVPMF. Topologically, residues 100 to 583 are extracellular; sequence GLPRHQDSPP…LGQVQKCQGS (484 aa). The tract at residues 179-222 is disordered; the sequence is RTASGRYRKGPERRLSKKMPERVQPQETSRSPTTSPTNPTSEHQ. A compositionally biased stretch (basic and acidic residues) spans 187–199; it reads KGPERRLSKKMPE. A compositionally biased stretch (low complexity) spans 206 to 219; the sequence is TSRSPTTSPTNPTS. Asn-310 and Asn-379 each carry an N-linked (GlcNAc...) asparagine glycan. The segment at 384–421 is disordered; that stretch reads MQSERQAQSQPHGLLKRLGAASSPGSAHQSNAIEETGT. A glycan (N-linked (GlcNAc...) asparagine) is linked at Asn-491.

Belongs to the FJX1/FJ family. Post-translationally, proteolytically cleaved to yield a secreted protein. In the eye disk, expressed in a gradient ahead of the morphogenetic furrow, high at the equator and low at the poles of the eye. In the leg disk, expressed in concentric rings, possibly corresponding to segmental boundaries. In the wing disk, expression is localized in the wing pouch; low in peripheral regions and high towards the center.

It is found in the golgi apparatus membrane. The protein resides in the secreted. It catalyses the reaction L-seryl-[protein] + ATP = O-phospho-L-seryl-[protein] + ADP + H(+). The enzyme catalyses L-threonyl-[protein] + ATP = O-phospho-L-threonyl-[protein] + ADP + H(+). Golgi serine/threonine protein kinase required for intermediate growth in the proximal-distal axis. Phosphorylates specific residues within extracellular cadherin domains of Fat (ft) and Dachsous (ds) as they transit through the Golgi. Acts in ommatidial polarity determination as a secondary signal downstream of Notch, JAK/STAT and wingless. Also necessary for the initiation, up-regulation or maintenance of Notch ligand, Serrate (Ser) expression in legs, thereby participating in a feedback loop with N signaling. Sufficient for joint formation and growth in the leg. This is Extracellular serine/threonine protein kinase four-jointed from Drosophila melanogaster (Fruit fly).